Consider the following 266-residue polypeptide: MTVPTPYEDLLRKIAEEGSHKDDRTGTGTTSLFGQQIRFDLNEGFPLLTTKKVHFHSVVGELLWFLQGDSNVKWLQDNNIRIWNEWADEDGELGPVYGVQWRSWPTPDGRHIDQISGALETLRNNPDSRRNIVSAWNVSELENMALPPCHLLFQLYVADGKLSCQLYQRSADMFLGVPFNIASYALLTHMFAQQAGLEVGEFIWTGGDCHIYDNHKEQVAEQLSREARPYPTLELNKAASMFEYSFDDITVSGYDPHPLIRGKVAV.

Arginine 24 lines the dUMP pocket. (6R)-5,10-methylene-5,6,7,8-tetrahydrofolate is bound at residue histidine 54. DUMP is bound at residue 129-130 (RR). The active-site Nucleophile is the cysteine 149. DUMP is bound by residues 169–172 (RSAD), asparagine 180, and 210–212 (HIY). Aspartate 172 is a (6R)-5,10-methylene-5,6,7,8-tetrahydrofolate binding site. Alanine 265 serves as a coordination point for (6R)-5,10-methylene-5,6,7,8-tetrahydrofolate.

It belongs to the thymidylate synthase family. Bacterial-type ThyA subfamily. Homodimer.

The protein resides in the cytoplasm. It catalyses the reaction dUMP + (6R)-5,10-methylene-5,6,7,8-tetrahydrofolate = 7,8-dihydrofolate + dTMP. It functions in the pathway pyrimidine metabolism; dTTP biosynthesis. Functionally, catalyzes the reductive methylation of 2'-deoxyuridine-5'-monophosphate (dUMP) to 2'-deoxythymidine-5'-monophosphate (dTMP) while utilizing 5,10-methylenetetrahydrofolate (mTHF) as the methyl donor and reductant in the reaction, yielding dihydrofolate (DHF) as a by-product. This enzymatic reaction provides an intracellular de novo source of dTMP, an essential precursor for DNA biosynthesis. The polypeptide is Thymidylate synthase (Corynebacterium glutamicum (strain R)).